A 217-amino-acid polypeptide reads, in one-letter code: Putative N-acetylmuramoyl-L-alanine amidase (217 aa).

Residues 3-206 (IAIDAGHGGQ…ISKSISIALK (204 aa)) enclose the MurNAc-LAA domain.

This sequence belongs to the N-acetylmuramoyl-L-alanine amidase 3 family.

It localises to the secreted. The enzyme catalyses Hydrolyzes the link between N-acetylmuramoyl residues and L-amino acid residues in certain cell-wall glycopeptides.. Its function is as follows. Cell-wall hydrolase involved in septum cleavage during cell division. This chain is Putative N-acetylmuramoyl-L-alanine amidase (amiB), found in Buchnera aphidicola subsp. Baizongia pistaciae (strain Bp).